The chain runs to 156 residues: ATP synthase subunit b (156 aa).

Residues 7–26 traverse the membrane as a helical segment; it reads ILGQAIAFVLFVWFCMKYVW.

The protein belongs to the ATPase B chain family. F-type ATPases have 2 components, F(1) - the catalytic core - and F(0) - the membrane proton channel. F(1) has five subunits: alpha(3), beta(3), gamma(1), delta(1), epsilon(1). F(0) has three main subunits: a(1), b(2) and c(10-14). The alpha and beta chains form an alternating ring which encloses part of the gamma chain. F(1) is attached to F(0) by a central stalk formed by the gamma and epsilon chains, while a peripheral stalk is formed by the delta and b chains.

Its subcellular location is the cell inner membrane. F(1)F(0) ATP synthase produces ATP from ADP in the presence of a proton or sodium gradient. F-type ATPases consist of two structural domains, F(1) containing the extramembraneous catalytic core and F(0) containing the membrane proton channel, linked together by a central stalk and a peripheral stalk. During catalysis, ATP synthesis in the catalytic domain of F(1) is coupled via a rotary mechanism of the central stalk subunits to proton translocation. Functionally, component of the F(0) channel, it forms part of the peripheral stalk, linking F(1) to F(0). This chain is ATP synthase subunit b, found in Pectobacterium atrosepticum (strain SCRI 1043 / ATCC BAA-672) (Erwinia carotovora subsp. atroseptica).